We begin with the raw amino-acid sequence, 763 residues long: Autophagy-related protein 18f (763 aa).

WD repeat units follow at residues 345 to 385 (AHKS…STSR) and 402 to 441 (FTNA…EGDA). Residues 701–711 (NESIQSPSTTT) show a composition bias toward polar residues. The tract at residues 701-763 (NESIQSPSTT…SEDEDEEQVD (63 aa)) is disordered. Composition is skewed to basic and acidic residues over residues 712–725 (QDDK…HGTE) and 741–754 (PVDK…KNHS).

The protein belongs to the WD repeat PROPPIN family. As to quaternary structure, component of the PI(3,5)P2 regulatory complex at least composed of ATG18, SAC/FIG4, FAB1 and VAC14. In terms of tissue distribution, expressed in roots, flowers and leaves.

Its subcellular location is the preautophagosomal structure membrane. It localises to the vacuole membrane. Its function is as follows. The PI(3,5)P2 regulatory complex regulates both the synthesis and turnover of phosphatidylinositol 3,5-bisphosphate (PtdIns(3,5)P2). Required for autophagy. This is Autophagy-related protein 18f (ATG18F) from Arabidopsis thaliana (Mouse-ear cress).